A 373-amino-acid polypeptide reads, in one-letter code: Thyroid hormone receptor beta-A (373 aa).

A modulating region spans residues 1–18; the sequence is MPSSMSGYIPSYLDKDEL. NR C4-type zinc fingers lie at residues 19–39 and 57–81; these read CVVCGDKATGYHYRCITCEGC and CKYEGKCVIDKVTRNQCQECRFKKC. The nuclear receptor DNA-binding region spans 19–93; the sequence is CVVCGDKATG…VGMATDLVLD (75 aa). One can recognise an NR LBD domain in the interval 129–373; sequence EEWELIQVVT…PPLFLEVFED (245 aa).

Belongs to the nuclear hormone receptor family. NR1 subfamily.

The protein localises to the nucleus. In terms of biological role, high affinity receptor for triiodothyronine (T3). In Xenopus laevis (African clawed frog), this protein is Thyroid hormone receptor beta-A (thrb-a).